Here is a 201-residue protein sequence, read N- to C-terminus: MTTFVPDAKTWADTAYTAQSESVATAEELQSIATLWEGIGIPAANFFDVAFQLAMRCSDGHASSLTVLSGNCTVAPTVTLKAAAGLVKAVLPLRQFCRYYAKFVWNWRLSHDLPPANWADSQFPAEARFAAFDFFDGVTNSAAPQPPDGLIRPPTELELSAAQTAKFAALARVRGSGFVTTAAEITHGRAEVSRTMLLSPP.

This sequence belongs to the potexvirus capsid protein family.

The protein resides in the virion. Its function is as follows. Required for genome encapsidation. Forms ribonucleoprotein complexes along with TGB1 helicase and viral RNA. This Lilium formosanum protein is Coat protein.